A 467-amino-acid polypeptide reads, in one-letter code: Glutamate--tRNA ligase (467 aa).

The 'HIGH' region motif lies at Pro9–Gly19. A 'KMSKS' region motif is present at residues Lys237–Arg241. Residue Lys240 participates in ATP binding.

The protein belongs to the class-I aminoacyl-tRNA synthetase family. Glutamate--tRNA ligase type 1 subfamily. Monomer.

Its subcellular location is the cytoplasm. The enzyme catalyses tRNA(Glu) + L-glutamate + ATP = L-glutamyl-tRNA(Glu) + AMP + diphosphate. Its function is as follows. Catalyzes the attachment of glutamate to tRNA(Glu) in a two-step reaction: glutamate is first activated by ATP to form Glu-AMP and then transferred to the acceptor end of tRNA(Glu). The polypeptide is Glutamate--tRNA ligase (Xanthomonas campestris pv. campestris (strain B100)).